A 472-amino-acid polypeptide reads, in one-letter code: Putative cytochrome P450 135B1 (472 aa).

Cysteine 388 is a binding site for heme. Residues 442 to 472 form a disordered region; sequence RDVSATSQATAQGAGCPAARGGGPSRAVGSQ. A compositionally biased stretch (low complexity) spans 452–472; sequence AQGAGCPAARGGGPSRAVGSQ.

This sequence belongs to the cytochrome P450 family. It depends on heme as a cofactor.

The protein is Putative cytochrome P450 135B1 (cyp135B1) of Mycobacterium bovis (strain ATCC BAA-935 / AF2122/97).